The primary structure comprises 62 residues: Photosystem II reaction center protein Z (62 aa).

The next 2 membrane-spanning stretches (helical) occupy residues 8-28 and 41-61; these read TLFALILFSFVLVVGVPVVFA and LSGLGLWILLVFVVGILNSFV.

The protein belongs to the PsbZ family. As to quaternary structure, PSII is composed of 1 copy each of membrane proteins PsbA, PsbB, PsbC, PsbD, PsbE, PsbF, PsbH, PsbI, PsbJ, PsbK, PsbL, PsbM, PsbT, PsbY, PsbZ, Psb30/Ycf12, at least 3 peripheral proteins of the oxygen-evolving complex and a large number of cofactors. It forms dimeric complexes.

The protein localises to the plastid. The protein resides in the chloroplast thylakoid membrane. In terms of biological role, may control the interaction of photosystem II (PSII) cores with the light-harvesting antenna, regulates electron flow through the 2 photosystem reaction centers. PSII is a light-driven water plastoquinone oxidoreductase, using light energy to abstract electrons from H(2)O, generating a proton gradient subsequently used for ATP formation. This chain is Photosystem II reaction center protein Z, found in Stigeoclonium helveticum (Green alga).